We begin with the raw amino-acid sequence, 330 residues long: Phospho-N-acetylmuramoyl-pentapeptide-transferase (330 aa).

10 helical membrane-spanning segments follow: residues 3–23 (SVVLGAAVAFFVTVTLGSSFI), 49–69 (TPTMGGVLMLMGLVAGLAVVA), 71–91 (PNPATFSVLLIVAATAGVGLY), 111–131 (FLLLSLVVVLADVMALRYVGV), 145–165 (VLGPGVVGVGLFSVLMLFVIV), 179–199 (GLAAGAGGIALLTYTAIAFLE), 204–224 (LAIICGAMVGAIIGFLWYNSH), 228–248 (IFMGDTGSLAIGGVLSAAAIL), 256–276 (PVIGGLFVIVALSVMIQVVVF), and 307–327 (FWIVQSAFSALGFLMYYFFLY).

This sequence belongs to the glycosyltransferase 4 family. MraY subfamily. Requires Mg(2+) as cofactor.

The protein localises to the cell membrane. It catalyses the reaction UDP-N-acetyl-alpha-D-muramoyl-L-alanyl-gamma-D-glutamyl-meso-2,6-diaminopimeloyl-D-alanyl-D-alanine + di-trans,octa-cis-undecaprenyl phosphate = di-trans,octa-cis-undecaprenyl diphospho-N-acetyl-alpha-D-muramoyl-L-alanyl-D-glutamyl-meso-2,6-diaminopimeloyl-D-alanyl-D-alanine + UMP. Its pathway is cell wall biogenesis; peptidoglycan biosynthesis. Catalyzes the initial step of the lipid cycle reactions in the biosynthesis of the cell wall peptidoglycan: transfers peptidoglycan precursor phospho-MurNAc-pentapeptide from UDP-MurNAc-pentapeptide onto the lipid carrier undecaprenyl phosphate, yielding undecaprenyl-pyrophosphoryl-MurNAc-pentapeptide, known as lipid I. In Rubrobacter xylanophilus (strain DSM 9941 / JCM 11954 / NBRC 16129 / PRD-1), this protein is Phospho-N-acetylmuramoyl-pentapeptide-transferase.